We begin with the raw amino-acid sequence, 807 residues long: Glycerol-3-phosphate acyltransferase (807 aa).

Residues 308–313 (CHRSHM) carry the HXXXXD motif motif.

It belongs to the GPAT/DAPAT family.

Its subcellular location is the cell inner membrane. The enzyme catalyses sn-glycerol 3-phosphate + an acyl-CoA = a 1-acyl-sn-glycero-3-phosphate + CoA. The protein operates within phospholipid metabolism; CDP-diacylglycerol biosynthesis; CDP-diacylglycerol from sn-glycerol 3-phosphate: step 1/3. This is Glycerol-3-phosphate acyltransferase from Shewanella sp. (strain MR-7).